The primary structure comprises 420 residues: Gamma-glutamyl phosphate reductase (420 aa).

It belongs to the gamma-glutamyl phosphate reductase family.

The protein localises to the cytoplasm. The enzyme catalyses L-glutamate 5-semialdehyde + phosphate + NADP(+) = L-glutamyl 5-phosphate + NADPH + H(+). It functions in the pathway amino-acid biosynthesis; L-proline biosynthesis; L-glutamate 5-semialdehyde from L-glutamate: step 2/2. Functionally, catalyzes the NADPH-dependent reduction of L-glutamate 5-phosphate into L-glutamate 5-semialdehyde and phosphate. The product spontaneously undergoes cyclization to form 1-pyrroline-5-carboxylate. The sequence is that of Gamma-glutamyl phosphate reductase from Streptococcus pneumoniae serotype 4 (strain ATCC BAA-334 / TIGR4).